The chain runs to 1109 residues: RNA2 polyprotein (1109 aa).

This sequence belongs to the nepoviruses RNA2 polyprotein family. Post-translationally, specific enzymatic cleavages in vivo by the P1 encoded 3C-like protease yield mature proteins.

The protein resides in the host cell junction. It is found in the host plasmodesma. It localises to the host cytoplasm. Its subcellular location is the host nucleus. The protein localises to the virion. Its function is as follows. Implicated in RNA2 replication. Could also be required for nematode transmission of the virus. Functionally, transports viral genome to neighboring plant cells directly through plasmosdesmata, without any budding. The movement protein allows efficient cell to cell propagation, by bypassing the host cell wall barrier. Acts by forming a tubular structure at the host plasmodesmata, enlarging it enough to allow free passage of virion capsids. In Vitis rupestris (Grape), this protein is RNA2 polyprotein.